The chain runs to 387 residues: 3-ketoacyl-CoA thiolase (387 aa).

Cys91 acts as the Acyl-thioester intermediate in catalysis. Active-site proton acceptor residues include His343 and Cys373.

The protein belongs to the thiolase-like superfamily. Thiolase family. In terms of assembly, heterotetramer of two alpha chains (FadB) and two beta chains (FadA).

It localises to the cytoplasm. The enzyme catalyses an acyl-CoA + acetyl-CoA = a 3-oxoacyl-CoA + CoA. It functions in the pathway lipid metabolism; fatty acid beta-oxidation. Its function is as follows. Catalyzes the final step of fatty acid oxidation in which acetyl-CoA is released and the CoA ester of a fatty acid two carbons shorter is formed. This chain is 3-ketoacyl-CoA thiolase, found in Salmonella paratyphi A (strain ATCC 9150 / SARB42).